Consider the following 394-residue polypeptide: Phosphoglycerate kinase (394 aa).

Residues 21-23, R37, 60-63, R115, and R148 each bind substrate; these read DLN and HLGR. Residues K199, E321, and 347 to 350 each bind ATP; that span reads GGDT.

It belongs to the phosphoglycerate kinase family. Monomer.

Its subcellular location is the cytoplasm. The catalysed reaction is (2R)-3-phosphoglycerate + ATP = (2R)-3-phospho-glyceroyl phosphate + ADP. It participates in carbohydrate degradation; glycolysis; pyruvate from D-glyceraldehyde 3-phosphate: step 2/5. The sequence is that of Phosphoglycerate kinase from Aromatoleum aromaticum (strain DSM 19018 / LMG 30748 / EbN1) (Azoarcus sp. (strain EbN1)).